We begin with the raw amino-acid sequence, 146 residues long: Transcriptional regulator MraZ (146 aa).

2 SpoVT-AbrB domains span residues 5-47 and 76-119; these read EYYH…TITD and SVQV…AKER.

This sequence belongs to the MraZ family. As to quaternary structure, forms oligomers.

The protein resides in the cytoplasm. It localises to the nucleoid. The chain is Transcriptional regulator MraZ from Dictyoglomus turgidum (strain DSM 6724 / Z-1310).